The primary structure comprises 230 residues: Nicotinamide riboside kinase 2 (230 aa).

9 to 17 (GMTNGGKTT) is an ATP binding site. Positions 16 and 35 each coordinate Mg(2+). D35 acts as the Proton acceptor in catalysis. Residues 35-38 (DDFF) and 54-55 (WD) each bind substrate. Residue R130 participates in ATP binding. Substrate contacts are provided by residues R131 and 136 to 137 (YT). Residues 134 to 136 (RNY) and 174 to 176 (KSR) each bind ATP. The interval 191 to 230 (LLNRSQESAPSPARPARTQGPGRGCGHRTARPAASQQDSM) is disordered.

Belongs to the uridine kinase family. NRK subfamily. As to quaternary structure, monomer. Interacts with ITGB1 alone or when associated with alpha-7, but not with alpha-5. In terms of tissue distribution, predominantly expressed in skeletal muscle and, at a much lower level, in the heart (at protein level). No expression in brain, kidney, liver, lung, pancreas nor placenta.

It catalyses the reaction beta-nicotinamide D-riboside + ATP = beta-nicotinamide D-ribonucleotide + ADP + H(+). The enzyme catalyses beta-D-ribosylnicotinate + ATP = nicotinate beta-D-ribonucleotide + ADP + H(+). It participates in cofactor biosynthesis; NAD(+) biosynthesis. In terms of biological role, catalyzes the phosphorylation of nicotinamide riboside (NR) and nicotinic acid riboside (NaR) to form nicotinamide mononucleotide (NMN) and nicotinic acid mononucleotide (NaMN). Reduces laminin matrix deposition and cell adhesion to laminin, but not to fibronectin. Involved in the regulation of PXN at the protein level and of PXN tyrosine phosphorylation. May play a role in the regulation of terminal myogenesis. This chain is Nicotinamide riboside kinase 2 (NMRK2), found in Homo sapiens (Human).